The sequence spans 42 residues: Cytochrome b559 subunit beta (42 aa).

A helical membrane pass occupies residues 17–33 (WLSIHALAVPTVFFLGA). Histidine 21 is a heme binding site.

Belongs to the PsbE/PsbF family. As to quaternary structure, heterodimer of an alpha subunit and a beta subunit. PSII is composed of 1 copy each of membrane proteins PsbA, PsbB, PsbC, PsbD, PsbE, PsbF, PsbH, PsbI, PsbJ, PsbK, PsbL, PsbM, PsbT, PsbX, PsbY, PsbZ, Psb30/Ycf12, at least 3 peripheral proteins of the oxygen-evolving complex and a large number of cofactors. It forms dimeric complexes. It depends on heme b as a cofactor.

It localises to the plastid. The protein localises to the chloroplast thylakoid membrane. In terms of biological role, this b-type cytochrome is tightly associated with the reaction center of photosystem II (PSII). PSII is a light-driven water:plastoquinone oxidoreductase that uses light energy to abstract electrons from H(2)O, generating O(2) and a proton gradient subsequently used for ATP formation. It consists of a core antenna complex that captures photons, and an electron transfer chain that converts photonic excitation into a charge separation. The polypeptide is Cytochrome b559 subunit beta (Tupiella akineta (Green alga)).